The chain runs to 269 residues: 3'(2'),5'-bisphosphate nucleotidase CysQ (269 aa).

Positions 69, 89, 91, 92, and 216 each coordinate Mg(2+). Glu-69 lines the substrate pocket. Residues 91–94 (LDGT) and Asp-216 contribute to the substrate site.

The protein belongs to the inositol monophosphatase superfamily. CysQ family. Requires Mg(2+) as cofactor.

The protein resides in the cell inner membrane. The enzyme catalyses adenosine 3',5'-bisphosphate + H2O = AMP + phosphate. Converts adenosine-3',5'-bisphosphate (PAP) to AMP. This is 3'(2'),5'-bisphosphate nucleotidase CysQ from Haemophilus influenzae (strain ATCC 51907 / DSM 11121 / KW20 / Rd).